A 163-amino-acid chain; its full sequence is Crossover junction endodeoxyribonuclease RuvC (163 aa).

Active-site residues include Asp9, Glu76, and Asp148. Mg(2+)-binding residues include Asp9, Glu76, and Asp148.

Belongs to the RuvC family. In terms of assembly, homodimer which binds Holliday junction (HJ) DNA. The HJ becomes 2-fold symmetrical on binding to RuvC with unstacked arms; it has a different conformation from HJ DNA in complex with RuvA. In the full resolvosome a probable DNA-RuvA(4)-RuvB(12)-RuvC(2) complex forms which resolves the HJ. Mg(2+) is required as a cofactor.

It localises to the cytoplasm. It catalyses the reaction Endonucleolytic cleavage at a junction such as a reciprocal single-stranded crossover between two homologous DNA duplexes (Holliday junction).. The RuvA-RuvB-RuvC complex processes Holliday junction (HJ) DNA during genetic recombination and DNA repair. Endonuclease that resolves HJ intermediates. Cleaves cruciform DNA by making single-stranded nicks across the HJ at symmetrical positions within the homologous arms, yielding a 5'-phosphate and a 3'-hydroxyl group; requires a central core of homology in the junction. The consensus cleavage sequence is 5'-(A/T)TT(C/G)-3'. Cleavage occurs on the 3'-side of the TT dinucleotide at the point of strand exchange. HJ branch migration catalyzed by RuvA-RuvB allows RuvC to scan DNA until it finds its consensus sequence, where it cleaves and resolves the cruciform DNA. The polypeptide is Crossover junction endodeoxyribonuclease RuvC (Nostoc sp. (strain PCC 7120 / SAG 25.82 / UTEX 2576)).